We begin with the raw amino-acid sequence, 575 residues long: Carboxylesterase 5A (575 aa).

The N-terminal stretch at 1–28 is a signal peptide; that stretch reads MSGDWVRPGQALIWVIWIFGAIIEGSVT. A disulfide bridge connects residues cysteine 94 and cysteine 121. Residue asparagine 134 is glycosylated (N-linked (GlcNAc...) asparagine). The active-site Acyl-ester intermediate is serine 226. Cysteine 280 and cysteine 291 are joined by a disulfide. A glycan (N-linked (GlcNAc...) asparagine) is linked at asparagine 281. Residue glutamate 345 is the Charge relay system of the active site. Asparagine 363 is a glycosylation site (N-linked (GlcNAc...) asparagine). Residue histidine 454 is the Charge relay system of the active site. Residue asparagine 524 is glycosylated (N-linked (GlcNAc...) asparagine).

This sequence belongs to the type-B carboxylesterase/lipase family. N-glycosylated.

Its subcellular location is the secreted. The catalysed reaction is a carboxylic ester + H2O = an alcohol + a carboxylate + H(+). Functionally, involved in the detoxification of xenobiotics and in the activation of ester and amide prodrugs. The chain is Carboxylesterase 5A (Ces5a) from Mus musculus (Mouse).